A 298-amino-acid chain; its full sequence is Quinolinate synthase (298 aa).

His19 and Ser36 together coordinate iminosuccinate. [4Fe-4S] cluster is bound at residue Cys81. Residues 107–109 and Ser124 each bind iminosuccinate; that span reads YVN. Cys168 is a [4Fe-4S] cluster binding site. Iminosuccinate is bound by residues 193 to 195 and Thr210; that span reads HPE. Residue Cys254 coordinates [4Fe-4S] cluster.

It belongs to the quinolinate synthase family. Type 2 subfamily. It depends on [4Fe-4S] cluster as a cofactor.

The protein localises to the cytoplasm. It catalyses the reaction iminosuccinate + dihydroxyacetone phosphate = quinolinate + phosphate + 2 H2O + H(+). The protein operates within cofactor biosynthesis; NAD(+) biosynthesis; quinolinate from iminoaspartate: step 1/1. Functionally, catalyzes the condensation of iminoaspartate with dihydroxyacetone phosphate to form quinolinate. The polypeptide is Quinolinate synthase (Thermotoga sp. (strain RQ2)).